A 158-amino-acid polypeptide reads, in one-letter code: Crossover junction endodeoxyribonuclease RuvC (158 aa).

Residues Asp7, Glu66, and Asp139 contribute to the active site. Residues Asp7, Glu66, and Asp139 each contribute to the Mg(2+) site.

This sequence belongs to the RuvC family. As to quaternary structure, homodimer which binds Holliday junction (HJ) DNA. The HJ becomes 2-fold symmetrical on binding to RuvC with unstacked arms; it has a different conformation from HJ DNA in complex with RuvA. In the full resolvosome a probable DNA-RuvA(4)-RuvB(12)-RuvC(2) complex forms which resolves the HJ. The cofactor is Mg(2+).

It localises to the cytoplasm. The enzyme catalyses Endonucleolytic cleavage at a junction such as a reciprocal single-stranded crossover between two homologous DNA duplexes (Holliday junction).. Functionally, the RuvA-RuvB-RuvC complex processes Holliday junction (HJ) DNA during genetic recombination and DNA repair. Endonuclease that resolves HJ intermediates. Cleaves cruciform DNA by making single-stranded nicks across the HJ at symmetrical positions within the homologous arms, yielding a 5'-phosphate and a 3'-hydroxyl group; requires a central core of homology in the junction. The consensus cleavage sequence is 5'-(A/T)TT(C/G)-3'. Cleavage occurs on the 3'-side of the TT dinucleotide at the point of strand exchange. HJ branch migration catalyzed by RuvA-RuvB allows RuvC to scan DNA until it finds its consensus sequence, where it cleaves and resolves the cruciform DNA. This is Crossover junction endodeoxyribonuclease RuvC from Campylobacter hominis (strain ATCC BAA-381 / DSM 21671 / CCUG 45161 / LMG 19568 / NCTC 13146 / CH001A).